An 82-amino-acid polypeptide reads, in one-letter code: Large ribosomal subunit protein bL31B (82 aa).

It belongs to the bacterial ribosomal protein bL31 family. Type B subfamily. As to quaternary structure, part of the 50S ribosomal subunit.

This Acinetobacter baylyi (strain ATCC 33305 / BD413 / ADP1) protein is Large ribosomal subunit protein bL31B.